Here is a 64-residue protein sequence, read N- to C-terminus: Metallothionein-A (64 aa).

The protein belongs to the metallothionein superfamily. Type 4 family.

Metallothioneins have a high content of cysteine residues that bind various heavy metals. The chain is Metallothionein-A (MTA) from Strongylocentrotus purpuratus (Purple sea urchin).